A 500-amino-acid polypeptide reads, in one-letter code: Glycerol kinase (500 aa).

Position 11 (threonine 11) interacts with ADP. The ATP site is built by threonine 11, threonine 12, and serine 13. Threonine 11 lines the sn-glycerol 3-phosphate pocket. ADP is bound at residue arginine 15. Arginine 81, glutamate 82, tyrosine 133, and aspartate 242 together coordinate sn-glycerol 3-phosphate. Residues arginine 81, glutamate 82, tyrosine 133, aspartate 242, and glutamine 243 each coordinate glycerol. Threonine 264 and glycine 307 together coordinate ADP. The ATP site is built by threonine 264, glycine 307, glutamine 311, and glycine 411. Glycine 411 provides a ligand contact to ADP.

Belongs to the FGGY kinase family.

It carries out the reaction glycerol + ATP = sn-glycerol 3-phosphate + ADP + H(+). The protein operates within polyol metabolism; glycerol degradation via glycerol kinase pathway; sn-glycerol 3-phosphate from glycerol: step 1/1. Its activity is regulated as follows. Inhibited by fructose 1,6-bisphosphate (FBP). Its function is as follows. Key enzyme in the regulation of glycerol uptake and metabolism. Catalyzes the phosphorylation of glycerol to yield sn-glycerol 3-phosphate. In Rhodopseudomonas palustris (strain ATCC BAA-98 / CGA009), this protein is Glycerol kinase.